The chain runs to 345 residues: UDP-N-acetylenolpyruvoylglucosamine reductase (345 aa).

The FAD-binding PCMH-type domain occupies 15–218; the sequence is VDVYAEKVII…NTIIFLRYKK (204 aa). Arg-161 is an active-site residue. Ser-230 functions as the Proton donor in the catalytic mechanism. The active site involves Glu-327.

Belongs to the MurB family. FAD serves as cofactor.

It is found in the cytoplasm. The enzyme catalyses UDP-N-acetyl-alpha-D-muramate + NADP(+) = UDP-N-acetyl-3-O-(1-carboxyvinyl)-alpha-D-glucosamine + NADPH + H(+). The protein operates within cell wall biogenesis; peptidoglycan biosynthesis. In terms of biological role, cell wall formation. The protein is UDP-N-acetylenolpyruvoylglucosamine reductase of Blochmanniella floridana.